A 600-amino-acid polypeptide reads, in one-letter code: Dihydroxy-acid dehydratase (600 aa).

Aspartate 82 contacts Mg(2+). Cysteine 123 serves as a coordination point for [2Fe-2S] cluster. Mg(2+)-binding residues include aspartate 124 and lysine 125. Residue lysine 125 is modified to N6-carboxylysine. Cysteine 192 contributes to the [2Fe-2S] cluster binding site. Glutamate 489 contributes to the Mg(2+) binding site. Serine 515 functions as the Proton acceptor in the catalytic mechanism.

The protein belongs to the IlvD/Edd family. In terms of assembly, homodimer. [2Fe-2S] cluster is required as a cofactor. The cofactor is Mg(2+).

The catalysed reaction is (2R)-2,3-dihydroxy-3-methylbutanoate = 3-methyl-2-oxobutanoate + H2O. The enzyme catalyses (2R,3R)-2,3-dihydroxy-3-methylpentanoate = (S)-3-methyl-2-oxopentanoate + H2O. It participates in amino-acid biosynthesis; L-isoleucine biosynthesis; L-isoleucine from 2-oxobutanoate: step 3/4. The protein operates within amino-acid biosynthesis; L-valine biosynthesis; L-valine from pyruvate: step 3/4. In terms of biological role, functions in the biosynthesis of branched-chain amino acids. Catalyzes the dehydration of (2R,3R)-2,3-dihydroxy-3-methylpentanoate (2,3-dihydroxy-3-methylvalerate) into 2-oxo-3-methylpentanoate (2-oxo-3-methylvalerate) and of (2R)-2,3-dihydroxy-3-methylbutanoate (2,3-dihydroxyisovalerate) into 2-oxo-3-methylbutanoate (2-oxoisovalerate), the penultimate precursor to L-isoleucine and L-valine, respectively. The polypeptide is Dihydroxy-acid dehydratase (Bacteroides fragilis (strain YCH46)).